A 313-amino-acid polypeptide reads, in one-letter code: MTVPNDDTWGPATSVGTTATMAAAARAIATRDGVINDPFAEPLVRAVGVNFLTRWAIGELVASDVDVEGSPWGLAQMPASIAARTRYFDEFYADAAAAGIRQAVILASGLDTRAYRLDWPAGMTVFEIDQPAVIEFKTTALARLGAEPKADLRTVAVDLRDDWSTALATAGLDSSKPTAWIAEGLFGYLAPEAQDGLLDAVTALSTPGSRLGSEAVPNTADMDPHAARERMRAATAKWRDHGFELDVDVISFAGERHDVGAYLQAHGWTTVATPMAELLADHGLPAIARADDDRQTMNGVTYYTSTLGTGRQR.

S-adenosyl-L-methionine contacts are provided by residues Asp-129 and Asp-158–Leu-159.

This sequence belongs to the UPF0677 family.

Exhibits S-adenosyl-L-methionine-dependent methyltransferase activity. The protein is Putative S-adenosyl-L-methionine-dependent methyltransferase MAP_4064c of Mycolicibacterium paratuberculosis (strain ATCC BAA-968 / K-10) (Mycobacterium paratuberculosis).